A 499-amino-acid chain; its full sequence is Na(+)/H(+) antiporter NhaB (499 aa).

11 helical membrane-spanning segments follow: residues 33 to 53 (PVIF…EFIF), 66 to 86 (PGGL…HTVY), 89 to 109 (VSGN…IYFM), 128 to 148 (AILS…LDAL), 237 to 257 (FIEF…AGLI), 305 to 325 (AIVA…VGLI), 326 to 346 (GLTV…HQIG), 349 to 369 (FEEA…VGVI), 393 to 413 (MFFI…VATV), 449 to 469 (ATPN…APLI), and 477 to 497 (VWMA…MIVI).

Belongs to the NhaB Na(+)/H(+) (TC 2.A.34) antiporter family.

The protein resides in the cell inner membrane. The enzyme catalyses 2 Na(+)(in) + 3 H(+)(out) = 2 Na(+)(out) + 3 H(+)(in). Its function is as follows. Na(+)/H(+) antiporter that extrudes sodium in exchange for external protons. The chain is Na(+)/H(+) antiporter NhaB from Hahella chejuensis (strain KCTC 2396).